Here is a 322-residue protein sequence, read N- to C-terminus: MNLKAITLMQFDSNGRLRHLLTLEGLSRDTLLQLLDCAAQNCALGVDPMGKRNVLAGMAVCTLFFEPSTRTRHSFHLAAQRLGADVLNFDASMSSTSKGESACDTLKNLEAMGVRGFIVRHPEEIVIAQLAAVVGEGTVLINAGAGRSTHPTQALLDMLTLCQAKGNDFSKLKLLFVGDIKHSRVARSNLHALRTLGAGQIRVCGPTALLPHDGLLSGCVVSQDFDAMLEGVDVLMMLRLQRERMEEGLVPSLEHYHANYGLTAARLARAAPDAVVLHPGPINRGVEITDEVADGPQSWILRQASNGVMVRMAVLETLLGCA.

Carbamoyl phosphate contacts are provided by Arg70 and Thr71. Lys98 is a binding site for L-aspartate. Residues Arg120, His150, and Gln153 each contribute to the carbamoyl phosphate site. The L-aspartate site is built by Arg184 and Arg239. Gly280 and Pro281 together coordinate carbamoyl phosphate.

It belongs to the aspartate/ornithine carbamoyltransferase superfamily. ATCase family. As to quaternary structure, heterododecamer (2C3:3R2) of six catalytic PyrB chains organized as two trimers (C3), and six regulatory PyrI chains organized as three dimers (R2).

It catalyses the reaction carbamoyl phosphate + L-aspartate = N-carbamoyl-L-aspartate + phosphate + H(+). It functions in the pathway pyrimidine metabolism; UMP biosynthesis via de novo pathway; (S)-dihydroorotate from bicarbonate: step 2/3. Functionally, catalyzes the condensation of carbamoyl phosphate and aspartate to form carbamoyl aspartate and inorganic phosphate, the committed step in the de novo pyrimidine nucleotide biosynthesis pathway. This is Aspartate carbamoyltransferase catalytic subunit from Xylella fastidiosa (strain 9a5c).